Reading from the N-terminus, the 351-residue chain is Inactive RHOMBOID-like protein 8 (351 aa).

Helical transmembrane passes span 48–68 (TWLV…TMGV), 130–150 (WLHS…FVGI), 160–180 (RIAV…VLFV), 183–203 (IPSI…LSAL), 216–236 (ALAI…LPFI), 239–259 (FANI…LFKP), and 294–314 (IICL…ACWG).

It belongs to the peptidase S54 family. In terms of tissue distribution, expressed in pollen mother cell.

The protein localises to the golgi apparatus membrane. Functionally, probable inactive rhomboid-type serine protease. Probably essential for the meiosis stage-specific callose accumulation and pollen exine formation. The sequence is that of Inactive RHOMBOID-like protein 8 from Arabidopsis thaliana (Mouse-ear cress).